Reading from the N-terminus, the 595-residue chain is MKLLNYAFVYRRFLLVVFTVLVLLPLPLIIRSKEAECAYILFVIATFWITEALPLSITALLPGLMFPMFGIMSSTHVASAYFKDFHLLLIGVICLATSIEKWNLHKRIALRMVMMVGVNPAWLTLGFMSSTAFLSMWLSNTSTAAMVMPIVEAVAQQITSAEAEAEATQMTYFNESAAQGLEVDETIIGQETNERKEKTKPALGSSNDKGKVSSKMETEKNTVTGAKYRSKKDHMMCKLMCLCIAYSSTIGGLTTITGTSTNLIFSEHFNTRYPDCRCLNFGSWFLFSFPVAVILLLLSWIWLQWLFLGFNFKEMFKCGKTKTLKEKACAEVIKQEYEKLGPMRYQEIVTLVIFIVMALLWFSRDPGFVTGWSVLFSEYPGYVTDSTVALVAGILFFLIPAKKLTKMTSTGDIIAFDYSPLITWKEFQSFMPWDIAILVGGGFALADGCQVSGLSSWIGSKLSPLGSLPVWLIILISSLIVTSLTEVASNPATITILFPILSPLAEAIHVNPLHILLPSTLCTSFAFLLPVANPPNAIVFSYGHLKVIDMVKAGLGVNILGVAVVMLGMFTWIEPMFNLHEYPSWAPDIVNQTMP.

Helical transmembrane passes span 13–33 (FLLV…IRSK), 40–60 (ILFV…ITAL), 77–97 (VASA…CLAT), 113–133 (VMMV…STAF), and 134–154 (LSMW…VEAV). The N-linked (GlcNAc...) asparagine glycan is linked to Asn174. The segment at 190–218 (QETNERKEKTKPALGSSNDKGKVSSKMET) is disordered. Over residues 208–218 (DKGKVSSKMET) the composition is skewed to basic and acidic residues. 8 consecutive transmembrane segments (helical) span residues 239 to 259 (LMCL…ITGT), 283 to 303 (SWFL…WIWL), 348 to 368 (IVTL…DPGF), 381 to 401 (GYVT…LIPA), 464 to 484 (PLGS…VTSL), 491 to 511 (PATI…IHVN), 512 to 532 (PLHI…LPVA), and 553 to 573 (AGLG…FTWI). Asn591 carries an N-linked (GlcNAc...) asparagine glycan.

This sequence belongs to the SLC13A/DASS transporter (TC 2.A.47) family. NADC subfamily. Kidney and intestine.

It localises to the apical cell membrane. The catalysed reaction is sulfate(out) + 3 Na(+)(out) = sulfate(in) + 3 Na(+)(in). It carries out the reaction selenate(out) + 3 Na(+)(out) = selenate(in) + 3 Na(+)(in). It catalyses the reaction thiosulfate(out) + 3 Na(+)(out) = thiosulfate(in) + 3 Na(+)(in). Functionally, sodium:sulfate symporter that mediates sulfate reabsorption in the kidney and small intestine. Can also mediate the transport of selenate and thiosulfate. In Rattus norvegicus (Rat), this protein is Solute carrier family 13 member 1 (Slc13a1).